The following is a 450-amino-acid chain: Flavin-containing monooxygenase FMO GS-OX-like 5 (450 aa).

17-22 contacts FAD; sequence GAGPAG. 215-220 serves as a coordination point for NADP(+); the sequence is GNSSSA.

The protein belongs to the FMO family. Requires FAD as cofactor.

Functionally, catalyzes the conversion of methylthioalkyl glucosinolates of any chain length into methylsulfinylalkyl glucosinolates. In Arabidopsis thaliana (Mouse-ear cress), this protein is Flavin-containing monooxygenase FMO GS-OX-like 5.